We begin with the raw amino-acid sequence, 363 residues long: Cobalt-precorrin-5B C(1)-methyltransferase (363 aa).

It belongs to the CbiD family.

The enzyme catalyses Co-precorrin-5B + S-adenosyl-L-methionine = Co-precorrin-6A + S-adenosyl-L-homocysteine. Its pathway is cofactor biosynthesis; adenosylcobalamin biosynthesis; cob(II)yrinate a,c-diamide from sirohydrochlorin (anaerobic route): step 6/10. Its function is as follows. Catalyzes the methylation of C-1 in cobalt-precorrin-5B to form cobalt-precorrin-6A. The sequence is that of Cobalt-precorrin-5B C(1)-methyltransferase from Treponema denticola (strain ATCC 35405 / DSM 14222 / CIP 103919 / JCM 8153 / KCTC 15104).